The primary structure comprises 556 residues: MSTQATGPSSTSGRRSNSTVRRGPPPSKKPVQSENGSVNGNTSKPNSPPPQPQSQAPSNGERTVKKLRLSKALTIPEGTTVFDACRRMAARRVDACLLTDSSALLSGIVTDKDVATRVIAEGLRPDQTLVSKVMTRNPIFVTSDSLALEALQKMVQGKFRHLPVVENGEVIALLDITKCLYDAISRMEKAAEQGSALAAAVEGVEKQWGSGYSAPYAFIETLRERMFKPALSTIITDNSKVALVAPSDPVSVAAKRMRDLRVNSVIISTGNKISGILTSKDILMRVVAQNLSPELTLVEKVMTPNPECASLETTILDALHTMHDGKFLHLPIIDKDGSAAACVDVLQITHAAISMVENSSGAVNDMANTMMQKFWDSALALEPPDDSDTQSEMSAMMHHSDIGKLSSYPSLGLGNSFSFKFEDLKGRVHRFTSGAENLEELMGIVMQRIGSDNNNVEQRPQIIYEDDEGDKVLITSDSDLVGAVTLARSTGQKVLRLHLDFTESTRSLSSETTQLKKGDSRDRGSGWVSWRGGVVVTGAVVLTSIAIVVYLKRSKN.

Composition is skewed to polar residues over residues 1–20 and 30–44; these read MSTQ…NSTV and PVQS…NTSK. The interval 1 to 63 is disordered; the sequence is MSTQATGPSS…SQAPSNGERT (63 aa). N-acetylserine is present on S2. 4 CBS domains span residues 68–127, 134–189, 235–294, and 302–360; these read RLSK…RPDQ, MTRN…RMEK, ITDN…LSPE, and MTPN…ENSS. A PB1 domain is found at 414-502; it reads GNSFSFKFED…KVLRLHLDFT (89 aa). The helical transmembrane segment at 527-549 threads the bilayer; sequence WVSWRGGVVVTGAVVLTSIAIVV.

It is found in the membrane. This Arabidopsis thaliana (Mouse-ear cress) protein is CBS domain-containing protein CBSCBSPB3 (CBSCBSPB3).